Reading from the N-terminus, the 667-residue chain is Threonine--tRNA ligase (667 aa).

A TGS domain is found at 3–64; sequence DMIRVTLPDG…EEDTNLALVT (62 aa). Residues 252 to 561 form a catalytic region; it reads DHRRLGQEMD…LIEHFVGRFP (310 aa). The Zn(2+) site is built by C357, H408, and H538.

Belongs to the class-II aminoacyl-tRNA synthetase family. In terms of assembly, homodimer. Requires Zn(2+) as cofactor.

The protein localises to the cytoplasm. It carries out the reaction tRNA(Thr) + L-threonine + ATP = L-threonyl-tRNA(Thr) + AMP + diphosphate + H(+). In terms of biological role, catalyzes the attachment of threonine to tRNA(Thr) in a two-step reaction: L-threonine is first activated by ATP to form Thr-AMP and then transferred to the acceptor end of tRNA(Thr). Also edits incorrectly charged L-seryl-tRNA(Thr). The protein is Threonine--tRNA ligase of Sphingopyxis alaskensis (strain DSM 13593 / LMG 18877 / RB2256) (Sphingomonas alaskensis).